We begin with the raw amino-acid sequence, 662 residues long: Bifunctional polymyxin resistance protein ArnA (662 aa).

The segment at 1–307 (MTSKAVVFAY…ELGLVEGARL (307 aa)) is formyltransferase ArnAFT. Catalysis depends on His-106, which acts as the Proton donor; for formyltransferase activity. (6R)-10-formyltetrahydrofolate-binding positions include Arg-116 and 138-142 (IERAD). The dehydrogenase ArnADH stretch occupies residues 316–662 (RRTRVLILGV…EALREREAQA (347 aa)). NAD(+) contacts are provided by residues Asp-349 and 370–371 (DI). UDP-alpha-D-glucuronate-binding positions include Ala-395, Tyr-400, and 434–435 (TS). The active-site Proton acceptor; for decarboxylase activity is the Glu-436. Residues Arg-462, Asn-493, 527–536 (RLVDGGAQKR), and Tyr-614 contribute to the UDP-alpha-D-glucuronate site. Catalysis depends on Arg-620, which acts as the Proton donor; for decarboxylase activity.

In the N-terminal section; belongs to the Fmt family. UDP-L-Ara4N formyltransferase subfamily. It in the C-terminal section; belongs to the NAD(P)-dependent epimerase/dehydratase family. UDP-glucuronic acid decarboxylase subfamily. In terms of assembly, homohexamer, formed by a dimer of trimers.

It catalyses the reaction UDP-alpha-D-glucuronate + NAD(+) = UDP-beta-L-threo-pentopyranos-4-ulose + CO2 + NADH. It carries out the reaction UDP-4-amino-4-deoxy-beta-L-arabinose + (6R)-10-formyltetrahydrofolate = UDP-4-deoxy-4-formamido-beta-L-arabinose + (6S)-5,6,7,8-tetrahydrofolate + H(+). Its pathway is nucleotide-sugar biosynthesis; UDP-4-deoxy-4-formamido-beta-L-arabinose biosynthesis; UDP-4-deoxy-4-formamido-beta-L-arabinose from UDP-alpha-D-glucuronate: step 1/3. It participates in nucleotide-sugar biosynthesis; UDP-4-deoxy-4-formamido-beta-L-arabinose biosynthesis; UDP-4-deoxy-4-formamido-beta-L-arabinose from UDP-alpha-D-glucuronate: step 3/3. It functions in the pathway bacterial outer membrane biogenesis; lipopolysaccharide biosynthesis. Bifunctional enzyme that catalyzes the oxidative decarboxylation of UDP-glucuronic acid (UDP-GlcUA) to UDP-4-keto-arabinose (UDP-Ara4O) and the addition of a formyl group to UDP-4-amino-4-deoxy-L-arabinose (UDP-L-Ara4N) to form UDP-L-4-formamido-arabinose (UDP-L-Ara4FN). The modified arabinose is attached to lipid A and is required for resistance to polymyxin and cationic antimicrobial peptides. The chain is Bifunctional polymyxin resistance protein ArnA from Pseudomonas aeruginosa (strain ATCC 15692 / DSM 22644 / CIP 104116 / JCM 14847 / LMG 12228 / 1C / PRS 101 / PAO1).